The following is a 158-amino-acid chain: Aspartate carbamoyltransferase regulatory chain (158 aa).

Residues cysteine 111, cysteine 116, cysteine 140, and cysteine 143 each contribute to the Zn(2+) site.

It belongs to the PyrI family. Contains catalytic and regulatory chains. Zn(2+) serves as cofactor.

In terms of biological role, involved in allosteric regulation of aspartate carbamoyltransferase. This is Aspartate carbamoyltransferase regulatory chain from Metallosphaera sedula (strain ATCC 51363 / DSM 5348 / JCM 9185 / NBRC 15509 / TH2).